Consider the following 724-residue polypeptide: Hyperosmolality-gated Ca2+ permeable channel 3.1 (724 aa).

Residues 1-4 lie on the Extracellular side of the membrane; it reads MEFG. The helical transmembrane segment at 5–25 threads the bilayer; the sequence is SFLVSLGTSFVIFVILMLLFT. The Cytoplasmic segment spans residues 26 to 85; the sequence is WLSRKSGNAPIYYPNRILKGLEPWEGTSLTRNPFAWMREALTSSEQDVVNLSGVDTAVHF. Residues 86-108 traverse the membrane as a helical segment; sequence VFLSTVLGIFACSSLLLLPTLLP. The Extracellular portion of the chain corresponds to 109 to 147; it reads LAATDNNIKNTKNATDTTSKGTFSQLDNLSMANITKKSS. A helical membrane pass occupies residues 148–170; it reads RLWAFLGAVYWISLVTYFFLWKA. The Cytoplasmic portion of the chain corresponds to 171 to 358; that stretch reads YKHVSSLRAQ…WQNLNIKLFS (188 aa). Residues 241–309 adopt a coiled-coil conformation; it reads EKLEGYKKKL…KAVLAEKQQT (69 aa). A helical transmembrane segment spans residues 359-385; the sequence is RIIRQYFIYFFVAVTILFYMIPIAFVS. Residues 386-411 lie on the Extracellular side of the membrane; the sequence is AITTLKNLQRIIPFIKPVVEITAIRT. The chain crosses the membrane as a helical span at residues 412–439; it reads VLESFLPQIALIVFLAMLPKLLLFLSKA. Residues 440–448 lie on the Cytoplasmic side of the membrane; the sequence is EGIPSQSHA. A helical membrane pass occupies residues 449–472; that stretch reads IRAASGKYFYFSVFNVFIGVTLAG. Residues 473–497 are Extracellular-facing; the sequence is TLFNTVKDIAKNPKLDMIINLLATS. Residues 498-529 traverse the membrane as a helical segment; that stretch reads LPKSATFFLTYVALKFFIGYGLELSRIIPLII. Over 530–554 the chain is Cytoplasmic; it reads FHLKKKYLCKTEAEVKEAWYPGDLS. A helical membrane pass occupies residues 555 to 574; sequence YATRVPGDMLILTITFCYSV. Residue Ile-575 is a topological domain, extracellular. Residues 576–594 form a helical membrane-spanning segment; the sequence is APLILIFGITYFGLGWLVL. At 595–612 the chain is on the cytoplasmic side; that stretch reads RNQALKVYVPSYESYGRM. A helical transmembrane segment spans residues 613–636; it reads WPHIHQRILAALFLFQVVMFGYLG. The Extracellular portion of the chain corresponds to 637–641; sequence AKTFF. A helical membrane pass occupies residues 642-662; that stretch reads YTALVIPLIITSLIFGYVCRQ. Residues 663–724 are Cytoplasmic-facing; that stretch reads KFYGGFEHTA…YQDFNAIAGV (62 aa).

The protein belongs to the CSC1 (TC 1.A.17) family. Homodimer.

The protein resides in the membrane. Its function is as follows. Acts as a hyperosmolarity-gated non-selective cation channel that permeates Ca(2+) ions. Mechanosensitive ion channel that converts mechanical stimuli into a flow of ions: activated in response to membrane stretch. Not activated in response to membrane poke. The polypeptide is Hyperosmolality-gated Ca2+ permeable channel 3.1 (Arabidopsis thaliana (Mouse-ear cress)).